Here is a 675-residue protein sequence, read N- to C-terminus: Putative acyl-coenzyme A oxidase 3.2, peroxisomal (675 aa).

The transit peptide at 1 to 34 directs the protein to the peroxisome; sequence MSENVELRRAHILANHILRSPRPSSNPSLTPEVC. 442 to 457 contributes to the FAD binding site; sequence AVGGQGLKTENRVGHL.

This sequence belongs to the acyl-CoA oxidase family. Requires FAD as cofactor.

It localises to the peroxisome. It catalyses the reaction a 2,3-saturated acyl-CoA + O2 = a (2E)-enoyl-CoA + H2O2. Catalyzes the desaturation of acyl-CoAs to 2-trans-enoyl-CoAs. This is Putative acyl-coenzyme A oxidase 3.2, peroxisomal (ACX3.2) from Arabidopsis thaliana (Mouse-ear cress).